The chain runs to 108 residues: uncharacterized protein (108 aa).

This is an uncharacterized protein from Saccharolobus islandicus (Sulfolobus islandicus).